A 245-amino-acid polypeptide reads, in one-letter code: 2,3-bisphosphoglycerate-dependent phosphoglycerate mutase (245 aa).

Substrate is bound by residues 8–15 (RHGQSLWN), 21–22 (TG), Arg60, 87–90 (ERHY), Lys98, 114–115 (RR), and 183–184 (GN). Catalysis depends on His9, which acts as the Tele-phosphohistidine intermediate. Glu87 functions as the Proton donor/acceptor in the catalytic mechanism.

The protein belongs to the phosphoglycerate mutase family. BPG-dependent PGAM subfamily.

It catalyses the reaction (2R)-2-phosphoglycerate = (2R)-3-phosphoglycerate. It functions in the pathway carbohydrate degradation; glycolysis; pyruvate from D-glyceraldehyde 3-phosphate: step 3/5. In terms of biological role, catalyzes the interconversion of 2-phosphoglycerate and 3-phosphoglycerate. This is 2,3-bisphosphoglycerate-dependent phosphoglycerate mutase from Bacillus thuringiensis subsp. konkukian (strain 97-27).